The sequence spans 443 residues: Serine/threonine-protein kinase ISR1 (443 aa).

In terms of domain architecture, Protein kinase spans 135–415 (LPSNKLVGQG…LRNDLFQDWK (281 aa)). ATP contacts are provided by residues 141–149 (VGQGSYSYV) and lysine 169. Aspartate 280 functions as the Proton acceptor in the catalytic mechanism.

The protein belongs to the protein kinase superfamily. Ser/Thr protein kinase family.

It catalyses the reaction L-seryl-[protein] + ATP = O-phospho-L-seryl-[protein] + ADP + H(+). The catalysed reaction is L-threonyl-[protein] + ATP = O-phospho-L-threonyl-[protein] + ADP + H(+). In terms of biological role, probable serine/threonine protein kinase which may function redundantly with MPK1-independent branch of the PCK1 pathway that is presumed to be required for the tolerance to high temperatures and staurosporine. The polypeptide is Serine/threonine-protein kinase ISR1 (ISR1) (Saccharomyces cerevisiae (strain ATCC 204508 / S288c) (Baker's yeast)).